The following is a 408-amino-acid chain: Cytotoxic granule-associated RNA binding protein tiar-1 (408 aa).

RRM domains are found at residues 46 to 121 (RTLY…WAVE), 135 to 213 (FHVF…WATR), and 241 to 312 (TSVY…WGKT).

Expressed in the germline and also in somatic tissues. Expressed in Ggonads and oocytes. Expression is slightly reduced in the most proximal oocytes, especially the -1 oocyte. Aggregates mostly in the head neurons, muscles, intestine, vulval and hypodermal cells during heat shock. Expressed only in the intestine as a response to heat shock, starvation and dietary restriction.

The protein resides in the cytoplasm. Its subcellular location is the nucleus. It is found in the stress granule. Acts downstream of ced-9 in the induction of germline apoptosis under different stress conditions including starvation, osmotic, oxidative, heat shock and UV stress. Plays a role in the formation of stress granules in response to heat shock and oxidative stress but not in response to osmotic stress. Required for the formation of stress granules in the core gonad but may not play a critical role in this process in the oocytes. Plays an important role in the formation of stress granules in the embryo. Protects female germ cells and embryos from heat shock. This Caenorhabditis elegans protein is Cytotoxic granule-associated RNA binding protein tiar-1.